Here is a 322-residue protein sequence, read N- to C-terminus: Adenine deaminase (322 aa).

3 residues coordinate Zn(2+): histidine 11, histidine 13, and histidine 189. Catalysis depends on glutamate 192, which acts as the Proton donor. Residue aspartate 270 coordinates Zn(2+). A substrate-binding site is contributed by aspartate 271.

The protein belongs to the metallo-dependent hydrolases superfamily. Adenosine and AMP deaminases family. Adenine deaminase type 2 subfamily. Requires Zn(2+) as cofactor.

The catalysed reaction is adenine + H2O + H(+) = hypoxanthine + NH4(+). Functionally, catalyzes the hydrolytic deamination of adenine to hypoxanthine. Plays an important role in the purine salvage pathway and in nitrogen catabolism. In Rhizobium johnstonii (strain DSM 114642 / LMG 32736 / 3841) (Rhizobium leguminosarum bv. viciae), this protein is Adenine deaminase.